Consider the following 497-residue polypeptide: Pancreatic alpha-amylase (497 aa).

Gln1 carries the post-translational modification Pyrrolidone carboxylic acid. 3 cysteine pairs are disulfide-bonded: Cys28–Cys86, Cys70–Cys115, and Cys141–Cys160. 3 residues coordinate Ca(2+): Asn100, Arg158, and Asp167. Arg195 is a chloride binding site. Residue Asp197 is the Nucleophile of the active site. Residue His201 coordinates Ca(2+). Residue Glu233 is the Proton donor of the active site. Asn298 and Arg337 together coordinate chloride. Cystine bridges form between Cys379–Cys385 and Cys451–Cys463.

Belongs to the glycosyl hydrolase 13 family. In terms of assembly, monomer. Ca(2+) serves as cofactor. The cofactor is chloride.

The protein resides in the secreted. It is found in the extracellular space. It catalyses the reaction Endohydrolysis of (1-&gt;4)-alpha-D-glucosidic linkages in polysaccharides containing three or more (1-&gt;4)-alpha-linked D-glucose units.. The chain is Pancreatic alpha-amylase from Struthio camelus (Common ostrich).